Reading from the N-terminus, the 238-residue chain is Ribose-5-phosphate isomerase A (238 aa).

Substrate contacts are provided by residues Ser-30–Thr-33, Asp-87–Asp-90, and Lys-100–Gly-103. The active-site Proton acceptor is Glu-109. Substrate is bound at residue Lys-127.

It belongs to the ribose 5-phosphate isomerase family. Homodimer.

It carries out the reaction aldehydo-D-ribose 5-phosphate = D-ribulose 5-phosphate. Its pathway is carbohydrate degradation; pentose phosphate pathway; D-ribose 5-phosphate from D-ribulose 5-phosphate (non-oxidative stage): step 1/1. In terms of biological role, catalyzes the reversible conversion of ribose-5-phosphate to ribulose 5-phosphate. In Synechococcus sp. (strain CC9311), this protein is Ribose-5-phosphate isomerase A.